A 238-amino-acid chain; its full sequence is Mitochondrial inner membrane protease ATP23 (238 aa).

His-138 contributes to the a divalent metal cation binding site. Residue Glu-139 is part of the active site. His-142 serves as a coordination point for a divalent metal cation.

This sequence belongs to the peptidase M76 family.

The protein resides in the mitochondrion inner membrane. Functionally, has a dual role in the assembly of mitochondrial ATPase. Acts as a protease that removes N-terminal residues of mitochondrial ATPase CF(0) subunit 6 at the intermembrane space side. Also involved in the correct assembly of the membrane-embedded ATPase CF(0) particle, probably mediating association of subunit 6 with the subunit 9 ring. The protein is Mitochondrial inner membrane protease ATP23 (ATP23) of Candida albicans (strain SC5314 / ATCC MYA-2876) (Yeast).